The chain runs to 177 residues: Nucleoside triphosphate/diphosphate phosphatase (177 aa).

Residue Arg-23 is the Proton donor of the active site. The Mg(2+) site is built by Asn-87, Asp-103, Asp-105, Asp-107, Asp-120, and Glu-123.

The protein belongs to the Ntdp family. The cofactor is Mg(2+).

It catalyses the reaction a ribonucleoside 5'-triphosphate + H2O = a ribonucleoside 5'-diphosphate + phosphate + H(+). It carries out the reaction a ribonucleoside 5'-diphosphate + H2O = a ribonucleoside 5'-phosphate + phosphate + H(+). In terms of biological role, has nucleoside phosphatase activity towards nucleoside triphosphates and nucleoside diphosphates. The polypeptide is Nucleoside triphosphate/diphosphate phosphatase (Streptococcus agalactiae serotype Ia (strain ATCC 27591 / A909 / CDC SS700)).